The following is a 300-amino-acid chain: Peptidyl-prolyl cis-trans isomerase E (300 aa).

In terms of domain architecture, RRM spans 6–84 (RTIYVGGLAD…RTIRVNLAKP (79 aa)). A PPIase cyclophilin-type domain is found at 142-298 (FFDIRIGGND…QKIVIYSCGE (157 aa)).

Belongs to the cyclophilin-type PPIase family. PPIase E subfamily.

The protein resides in the nucleus. It catalyses the reaction [protein]-peptidylproline (omega=180) = [protein]-peptidylproline (omega=0). PPIases accelerate the folding of proteins. It catalyzes the cis-trans isomerization of proline imidic peptide bonds in oligopeptides. Combines RNA-binding and PPIase activities. The chain is Peptidyl-prolyl cis-trans isomerase E (cyp33) from Drosophila melanogaster (Fruit fly).